The sequence spans 354 residues: UDP-N-acetylglucosamine--N-acetylmuramyl-(pentapeptide) pyrophosphoryl-undecaprenol N-acetylglucosamine transferase (354 aa).

Residues 11–13, arginine 164, serine 194, and glutamine 289 each bind UDP-N-acetyl-alpha-D-glucosamine; that span reads TAG.

Belongs to the glycosyltransferase 28 family. MurG subfamily.

It is found in the cell membrane. The catalysed reaction is di-trans,octa-cis-undecaprenyl diphospho-N-acetyl-alpha-D-muramoyl-L-alanyl-D-glutamyl-meso-2,6-diaminopimeloyl-D-alanyl-D-alanine + UDP-N-acetyl-alpha-D-glucosamine = di-trans,octa-cis-undecaprenyl diphospho-[N-acetyl-alpha-D-glucosaminyl-(1-&gt;4)]-N-acetyl-alpha-D-muramoyl-L-alanyl-D-glutamyl-meso-2,6-diaminopimeloyl-D-alanyl-D-alanine + UDP + H(+). The protein operates within cell wall biogenesis; peptidoglycan biosynthesis. Its function is as follows. Cell wall formation. Catalyzes the transfer of a GlcNAc subunit on undecaprenyl-pyrophosphoryl-MurNAc-pentapeptide (lipid intermediate I) to form undecaprenyl-pyrophosphoryl-MurNAc-(pentapeptide)GlcNAc (lipid intermediate II). This chain is UDP-N-acetylglucosamine--N-acetylmuramyl-(pentapeptide) pyrophosphoryl-undecaprenol N-acetylglucosamine transferase, found in Clostridium botulinum (strain 657 / Type Ba4).